We begin with the raw amino-acid sequence, 146 residues long: Anti-sigma F factor (146 aa).

This sequence belongs to the anti-sigma-factor family.

The catalysed reaction is L-seryl-[protein] + ATP = O-phospho-L-seryl-[protein] + ADP + H(+). It carries out the reaction L-threonyl-[protein] + ATP = O-phospho-L-threonyl-[protein] + ADP + H(+). Its function is as follows. Binds to sigma F and blocks its ability to form an RNA polymerase holoenzyme (E-sigma F). Phosphorylates SpoIIAA on a serine residue. This phosphorylation may enable SpoIIAA to act as an anti-anti-sigma factor that counteracts SpoIIAB and thus releases sigma F from inhibition. The protein is Anti-sigma F factor of Geobacillus thermodenitrificans (strain NG80-2).